Consider the following 1021-residue polypeptide: Peroxisomal ATPase PEX6 (1021 aa).

Residue 763–770 (GPPGTGKT) coordinates ATP.

It belongs to the AAA ATPase family. In terms of assembly, interacts with PEX1; forming the PEX1-PEX6 AAA ATPase complex, which is composed of a heterohexamer formed by a trimer of PEX1-PEX6 dimers.

It localises to the cytoplasm. The protein localises to the cytosol. The protein resides in the peroxisome membrane. It carries out the reaction ATP + H2O = ADP + phosphate + H(+). In terms of biological role, component of the PEX1-PEX6 AAA ATPase complex, a protein dislocase complex that mediates the ATP-dependent extraction of the PEX5 receptor from peroxisomal membranes, an essential step for PEX5 recycling. Specifically recognizes PEX5 monoubiquitinated at 'Cys-6', and pulls it out of the peroxisome lumen through the PEX2-PEX10-PEX12 retrotranslocation channel. Extraction by the PEX1-PEX6 AAA ATPase complex is accompanied by unfolding of the TPR repeats and release of bound cargo from PEX5. This Eremothecium gossypii (strain ATCC 10895 / CBS 109.51 / FGSC 9923 / NRRL Y-1056) (Yeast) protein is Peroxisomal ATPase PEX6 (PEX6).